Consider the following 288-residue polypeptide: Diaminopimelate epimerase (288 aa).

Asn17, Gln47, and Asn67 together coordinate substrate. Cys76 (proton donor) is an active-site residue. Substrate contacts are provided by residues 77 to 78 (GN), Asn164, Asn197, and 215 to 216 (ER). Cys224 serves as the catalytic Proton acceptor. 225-226 (GS) provides a ligand contact to substrate.

It belongs to the diaminopimelate epimerase family. In terms of assembly, homodimer.

It is found in the cytoplasm. The catalysed reaction is (2S,6S)-2,6-diaminopimelate = meso-2,6-diaminopimelate. Its pathway is amino-acid biosynthesis; L-lysine biosynthesis via DAP pathway; DL-2,6-diaminopimelate from LL-2,6-diaminopimelate: step 1/1. In terms of biological role, catalyzes the stereoinversion of LL-2,6-diaminopimelate (L,L-DAP) to meso-diaminopimelate (meso-DAP), a precursor of L-lysine and an essential component of the bacterial peptidoglycan. In Rhodopseudomonas palustris (strain BisA53), this protein is Diaminopimelate epimerase.